The primary structure comprises 176 residues: Cytochrome b (176 aa).

The next 3 helical transmembrane spans lie at 33–53, 77–98, and 113–133; these read FGSLLGICLMLQIMTGLFLAM, WMLRYLHANGASMFFICLYLHV, and WNVGVLLLFTVMATAFMGYVL. Residues histidine 83 and histidine 97 each coordinate heme b.

This sequence belongs to the cytochrome b family. The cytochrome bc1 complex contains 11 subunits: 3 respiratory subunits (MT-CYB, CYC1 and UQCRFS1), 2 core proteins (UQCRC1 and UQCRC2) and 6 low-molecular weight proteins (UQCRH/QCR6, UQCRB/QCR7, UQCRQ/QCR8, UQCR10/QCR9, UQCR11/QCR10 and a cleavage product of UQCRFS1). This cytochrome bc1 complex then forms a dimer. Heme b serves as cofactor.

The protein resides in the mitochondrion inner membrane. In terms of biological role, component of the ubiquinol-cytochrome c reductase complex (complex III or cytochrome b-c1 complex) that is part of the mitochondrial respiratory chain. The b-c1 complex mediates electron transfer from ubiquinol to cytochrome c. Contributes to the generation of a proton gradient across the mitochondrial membrane that is then used for ATP synthesis. In Idionycteris phyllotis (Allen's big-eared bat), this protein is Cytochrome b (MT-CYB).